Consider the following 106-residue polypeptide: UPF0145 protein APJL_0492 (106 aa).

It belongs to the UPF0145 family.

This Actinobacillus pleuropneumoniae serotype 3 (strain JL03) protein is UPF0145 protein APJL_0492.